A 660-amino-acid polypeptide reads, in one-letter code: Acetyl-coenzyme A synthetase (660 aa).

Residues 197-200 and Thr317 contribute to the CoA site; that span reads RGGK. Residues 397 to 399, 421 to 426, Asp512, and Arg528 contribute to the ATP site; these read GEP and DTFWQT. Ser536 lines the CoA pocket. Arg539 lines the ATP pocket. The Mg(2+) site is built by Val550 and Val555. At Lys625 the chain carries N6-acetyllysine.

The protein belongs to the ATP-dependent AMP-binding enzyme family. Mg(2+) serves as cofactor. In terms of processing, acetylated. Deacetylation by the SIR2-homolog deacetylase activates the enzyme.

The enzyme catalyses acetate + ATP + CoA = acetyl-CoA + AMP + diphosphate. Catalyzes the conversion of acetate into acetyl-CoA (AcCoA), an essential intermediate at the junction of anabolic and catabolic pathways. AcsA undergoes a two-step reaction. In the first half reaction, AcsA combines acetate with ATP to form acetyl-adenylate (AcAMP) intermediate. In the second half reaction, it can then transfer the acetyl group from AcAMP to the sulfhydryl group of CoA, forming the product AcCoA. This chain is Acetyl-coenzyme A synthetase, found in Ralstonia pickettii (strain 12J).